The chain runs to 206 residues: MTALNSTCSLQPRTAFVQRRTAETDVQVRLSLDGKGQHEIDTGIPFLDHMLAQLSTHGLIDLQIKAVGDLHIDDHHTNEDVGIALGQALAQALQDRRGIYRFGHFWAPLDEALVQVVLDFSGRPHLSYGLELTVERIGRYETQLVREFYQAVANHAQMTLHIRQAAGLNAHHIVEASFKAFARALRMAVERDPRRQDGIPSSKGVL.

This sequence belongs to the imidazoleglycerol-phosphate dehydratase family.

Its subcellular location is the cytoplasm. It catalyses the reaction D-erythro-1-(imidazol-4-yl)glycerol 3-phosphate = 3-(imidazol-4-yl)-2-oxopropyl phosphate + H2O. It participates in amino-acid biosynthesis; L-histidine biosynthesis; L-histidine from 5-phospho-alpha-D-ribose 1-diphosphate: step 6/9. In Synechococcus sp. (strain JA-3-3Ab) (Cyanobacteria bacterium Yellowstone A-Prime), this protein is Imidazoleglycerol-phosphate dehydratase.